A 239-amino-acid polypeptide reads, in one-letter code: tRNA1(Val) (adenine(37)-N6)-methyltransferase (239 aa).

This sequence belongs to the methyltransferase superfamily. tRNA (adenine-N(6)-)-methyltransferase family.

It is found in the cytoplasm. It carries out the reaction adenosine(37) in tRNA1(Val) + S-adenosyl-L-methionine = N(6)-methyladenosine(37) in tRNA1(Val) + S-adenosyl-L-homocysteine + H(+). Specifically methylates the adenine in position 37 of tRNA(1)(Val) (anticodon cmo5UAC). This chain is tRNA1(Val) (adenine(37)-N6)-methyltransferase, found in Vibrio campbellii (strain ATCC BAA-1116).